Reading from the N-terminus, the 340-residue chain is Protein RecA (340 aa).

ATP is bound at residue 65-72 (GPESGGKT).

It belongs to the RecA family.

The protein resides in the cytoplasm. In terms of biological role, can catalyze the hydrolysis of ATP in the presence of single-stranded DNA, the ATP-dependent uptake of single-stranded DNA by duplex DNA, and the ATP-dependent hybridization of homologous single-stranded DNAs. It interacts with LexA causing its activation and leading to its autocatalytic cleavage. This chain is Protein RecA, found in Thermus thermophilus (strain ATCC 27634 / DSM 579 / HB8).